The following is a 226-amino-acid chain: NAD(P)H-hydrate epimerase (226 aa).

The 206-residue stretch at 10 to 215 (AIELDLDLFE…ALQRKYQLNL (206 aa)) folds into the YjeF N-terminal domain. (6S)-NADPHX is bound at residue 58–62 (NNGGD). Residues asparagine 59 and aspartate 123 each contribute to the K(+) site. (6S)-NADPHX contacts are provided by residues 127–133 (GFGFKPP) and aspartate 156. Serine 159 is a binding site for K(+).

This sequence belongs to the NnrE/AIBP family. Requires K(+) as cofactor.

The enzyme catalyses (6R)-NADHX = (6S)-NADHX. It carries out the reaction (6R)-NADPHX = (6S)-NADPHX. Its function is as follows. Catalyzes the epimerization of the S- and R-forms of NAD(P)HX, a damaged form of NAD(P)H that is a result of enzymatic or heat-dependent hydration. This is a prerequisite for the S-specific NAD(P)H-hydrate dehydratase to allow the repair of both epimers of NAD(P)HX. The polypeptide is NAD(P)H-hydrate epimerase (Drosophila persimilis (Fruit fly)).